The primary structure comprises 110 residues: uncharacterized protein (110 aa).

A helical membrane pass occupies residues 18–34 (MFPLISTFTSIGLGVLM).

The protein localises to the membrane. This is an uncharacterized protein from Saccharomyces cerevisiae (strain ATCC 204508 / S288c) (Baker's yeast).